Here is a 92-residue protein sequence, read N- to C-terminus: Small ribosomal subunit protein uS19 (92 aa).

Belongs to the universal ribosomal protein uS19 family.

In terms of biological role, protein S19 forms a complex with S13 that binds strongly to the 16S ribosomal RNA. This chain is Small ribosomal subunit protein uS19, found in Beijerinckia indica subsp. indica (strain ATCC 9039 / DSM 1715 / NCIMB 8712).